Reading from the N-terminus, the 639-residue chain is Tubulin--tyrosine ligase-like protein 12 (639 aa).

Residues 295–639 (PQGHVFRVHC…TDNCHVTRII (345 aa)) form the TTL domain. ATP contacts are provided by residues 445–448 (SKYI), Lys463, and Asp465.

This sequence belongs to the tubulin--tyrosine ligase family. Interacts with MAVS; the interaction prevents MAVS binding to TBK1 and IKBKE. Interacts (via N-terminus) with TBK1 (via protein kinase domain). Interacts (via TTL domain) with IKBKE (via protein kinase domain). Interacts with tubulin alpha. Interacts with histone H3 and histone H4 (when trimethylated at 'Lys-20' (H4K20me3)). Interacts with CBX3. As to expression, widely expressed with highest levels in brain, kidney, liver, lung, muscle and testis.

Its subcellular location is the cytoplasm. It is found in the midbody. The protein localises to the cytoskeleton. It localises to the microtubule organizing center. The protein resides in the centrosome. Its subcellular location is the spindle. It is found in the nucleus. Functionally, negatively regulates post-translational modifications of tubulin, including detyrosination of the C-terminus and polyglutamylation of glutamate residues. Also, indirectly promotes histone H4 trimethylation at 'Lys-20' (H4K20me3). Probably by controlling tubulin and/or histone H4 post-translational modifications, plays a role in mitosis and in maintaining chromosome number stability. During RNA virus-mediated infection, acts as a negative regulator of the RIG-I pathway by preventing MAVS binding to TBK1 and IKBKE. This is Tubulin--tyrosine ligase-like protein 12 from Mus musculus (Mouse).